The chain runs to 445 residues: Phosphoglucosamine mutase (445 aa).

Ser102 functions as the Phosphoserine intermediate in the catalytic mechanism. The Mg(2+) site is built by Ser102, Asp241, Asp243, and Asp245. The residue at position 102 (Ser102) is a Phosphoserine.

Belongs to the phosphohexose mutase family. Mg(2+) is required as a cofactor. Activated by phosphorylation.

It carries out the reaction alpha-D-glucosamine 1-phosphate = D-glucosamine 6-phosphate. Catalyzes the conversion of glucosamine-6-phosphate to glucosamine-1-phosphate. This Cronobacter sakazakii (strain ATCC BAA-894) (Enterobacter sakazakii) protein is Phosphoglucosamine mutase.